The primary structure comprises 318 residues: Thioredoxin reductase (318 aa).

An FAD-binding site is contributed by 36–43 (TGMQQGGQ). C136 and C139 are oxidised to a cystine. 286-295 (DVMDHNYRQA) provides a ligand contact to FAD.

This sequence belongs to the class-II pyridine nucleotide-disulfide oxidoreductase family. Homodimer. Requires FAD as cofactor.

The protein resides in the cytoplasm. It carries out the reaction [thioredoxin]-dithiol + NADP(+) = [thioredoxin]-disulfide + NADPH + H(+). The sequence is that of Thioredoxin reductase (trxB) from Vibrio cholerae serotype O1 (strain ATCC 39315 / El Tor Inaba N16961).